The chain runs to 172 residues: Peptide methionine sulfoxide reductase MsrA 2 (172 aa).

Cysteine 12 is an active-site residue.

The protein belongs to the MsrA Met sulfoxide reductase family.

The enzyme catalyses L-methionyl-[protein] + [thioredoxin]-disulfide + H2O = L-methionyl-(S)-S-oxide-[protein] + [thioredoxin]-dithiol. It catalyses the reaction [thioredoxin]-disulfide + L-methionine + H2O = L-methionine (S)-S-oxide + [thioredoxin]-dithiol. Its function is as follows. Has an important function as a repair enzyme for proteins that have been inactivated by oxidation. Catalyzes the reversible oxidation-reduction of methionine sulfoxide in proteins to methionine. The chain is Peptide methionine sulfoxide reductase MsrA 2 (msrA2) from Lactococcus lactis subsp. lactis (strain IL1403) (Streptococcus lactis).